The chain runs to 156 residues: Small ribosomal subunit protein uS7 (156 aa).

Belongs to the universal ribosomal protein uS7 family. Part of the 30S ribosomal subunit. Contacts proteins S9 and S11.

Its function is as follows. One of the primary rRNA binding proteins, it binds directly to 16S rRNA where it nucleates assembly of the head domain of the 30S subunit. Is located at the subunit interface close to the decoding center, probably blocks exit of the E-site tRNA. This is Small ribosomal subunit protein uS7 from Streptococcus gordonii (strain Challis / ATCC 35105 / BCRC 15272 / CH1 / DL1 / V288).